We begin with the raw amino-acid sequence, 333 residues long: Transaldolase (333 aa).

Lysine 135 serves as the catalytic Schiff-base intermediate with substrate.

Belongs to the transaldolase family. Type 1 subfamily. Homodimer.

It localises to the cytoplasm. It carries out the reaction D-sedoheptulose 7-phosphate + D-glyceraldehyde 3-phosphate = D-erythrose 4-phosphate + beta-D-fructose 6-phosphate. It participates in carbohydrate degradation; pentose phosphate pathway; D-glyceraldehyde 3-phosphate and beta-D-fructose 6-phosphate from D-ribose 5-phosphate and D-xylulose 5-phosphate (non-oxidative stage): step 2/3. Transaldolase is important for the balance of metabolites in the pentose-phosphate pathway. In Prochlorococcus marinus (strain MIT 9301), this protein is Transaldolase.